We begin with the raw amino-acid sequence, 106 residues long: YcgL domain-containing protein HCH_02617 (106 aa).

A YcgL domain is found at 6-90 (RLISIFRSSK…VQDDYMMDVV (85 aa)).

This chain is YcgL domain-containing protein HCH_02617, found in Hahella chejuensis (strain KCTC 2396).